A 139-amino-acid chain; its full sequence is Superoxide dismutase [Cu-Zn] (139 aa).

C6 carries S-palmitoyl cysteine lipidation. Residues H47 and H49 each coordinate Cu cation. The Zn(2+) site is built by H72, H81, and D84. H114 serves as a coordination point for Cu cation. Residues 118-129 (DDLGKGGNDESL) show a composition bias toward basic and acidic residues. Residues 118–139 (DDLGKGGNDESLKTGNAGGRMA) are disordered.

Belongs to the Cu-Zn superoxide dismutase family. In terms of assembly, homodimer. Cu cation is required as a cofactor. It depends on Zn(2+) as a cofactor.

It is found in the cytoplasm. The protein resides in the nucleus. It carries out the reaction 2 superoxide + 2 H(+) = H2O2 + O2. Functionally, destroys radicals which are normally produced within the cells and which are toxic to biological systems. This chain is Superoxide dismutase [Cu-Zn] (sod1), found in Lampanyctus crocodilus (Jewel lanternfish).